The primary structure comprises 372 residues: Putative glutamate--cysteine ligase 2 (372 aa).

This sequence belongs to the glutamate--cysteine ligase type 2 family. YbdK subfamily. Homodimer.

The enzyme catalyses L-cysteine + L-glutamate + ATP = gamma-L-glutamyl-L-cysteine + ADP + phosphate + H(+). ATP-dependent carboxylate-amine ligase which exhibits weak glutamate--cysteine ligase activity. The sequence is that of Putative glutamate--cysteine ligase 2 from Citrobacter koseri (strain ATCC BAA-895 / CDC 4225-83 / SGSC4696).